The following is a 418-amino-acid chain: Putative competence-damage inducible protein (418 aa).

This sequence belongs to the CinA family.

This Streptococcus pneumoniae (strain CGSP14) protein is Putative competence-damage inducible protein.